The following is a 226-amino-acid chain: Small ribosomal subunit protein uS3 (226 aa).

The KH type-2 domain occupies 39–107 (VRKFLNKELR…PAQINISEVR (69 aa)).

Belongs to the universal ribosomal protein uS3 family. Part of the 30S ribosomal subunit. Forms a tight complex with proteins S10 and S14.

Functionally, binds the lower part of the 30S subunit head. Binds mRNA in the 70S ribosome, positioning it for translation. This Idiomarina loihiensis (strain ATCC BAA-735 / DSM 15497 / L2-TR) protein is Small ribosomal subunit protein uS3.